The chain runs to 160 residues: uncharacterized protein (160 aa).

The helical transmembrane segment at Leu-8–Ala-28 threads the bilayer.

The protein localises to the membrane. This is an uncharacterized protein from Escherichia coli (strain K12).